We begin with the raw amino-acid sequence, 419 residues long: Fusaric acid cluster transcription factor FUB10 (419 aa).

A DNA-binding region (zn(2)-C6 fungal-type) is located at residues 16 to 47; the sequence is CDRCRAQKLRCHRDSGHSTDACLRCLKSGIEC. Residues 50–92 form a disordered region; sequence SKARPTGRPPSRQVQPTVVVEQGDTSSSSHTTDSSPSAGGTDM. Residues 74 to 86 are compositionally biased toward low complexity; it reads TSSSSHTTDSSPS.

The protein localises to the nucleus. Its function is as follows. Transcription factor that regulates the expression of the gene cluster that mediates the biosynthesis of fusaric acid, a mycotoxin with low to moderate toxicity to animals and humans, but with high phytotoxic properties. The sequence is that of Fusaric acid cluster transcription factor FUB10 from Gibberella fujikuroi (strain CBS 195.34 / IMI 58289 / NRRL A-6831) (Bakanae and foot rot disease fungus).